We begin with the raw amino-acid sequence, 160 residues long: Small ribosomal subunit protein uS9 (160 aa).

Belongs to the universal ribosomal protein uS9 family.

In Cereibacter sphaeroides (strain ATCC 17029 / ATH 2.4.9) (Rhodobacter sphaeroides), this protein is Small ribosomal subunit protein uS9.